The following is a 247-amino-acid chain: ATP synthase subunit a, chloroplastic (247 aa).

5 consecutive transmembrane segments (helical) span residues 38-58 (QVLI…IIAV), 95-115 (VPFI…GALL), 133-153 (DINT…YAGL), 199-219 (LVVV…VMFL), and 220-240 (GLFT…AYIG).

Belongs to the ATPase A chain family. In terms of assembly, F-type ATPases have 2 components, CF(1) - the catalytic core - and CF(0) - the membrane proton channel. CF(1) has five subunits: alpha(3), beta(3), gamma(1), delta(1), epsilon(1). CF(0) has four main subunits: a, b, b' and c.

It is found in the plastid. Its subcellular location is the chloroplast thylakoid membrane. Key component of the proton channel; it plays a direct role in the translocation of protons across the membrane. The sequence is that of ATP synthase subunit a, chloroplastic from Phalaenopsis aphrodite subsp. formosana (Moth orchid).